We begin with the raw amino-acid sequence, 268 residues long: Secreted RxLR effector protein 6 (268 aa).

The N-terminal stretch at 1–19 is a signal peptide; sequence MRGAFYIAIALLVVRSRTA. The RxLR-dEER signature appears at 48–63; it reads RYLRDGLAHSAANEER. The disordered stretch occupies residues 90–123; it reads IGGHSHTPKSKRKVNLSPAKSQSGIRKKSTSINK. The segment covering 107 to 123 has biased composition (polar residues); that stretch reads PAKSQSGIRKKSTSINK.

The protein belongs to the RxLR effector family.

It is found in the secreted. The protein localises to the host nucleus. The protein resides in the host cytoplasm. Functionally, secreted effector that completely suppresses the host cell death induced by cell death-inducing proteins. The sequence is that of Secreted RxLR effector protein 6 from Plasmopara viticola (Downy mildew of grapevine).